A 511-amino-acid polypeptide reads, in one-letter code: Cytochrome P450 93B2 (511 aa).

The chain crosses the membrane as a helical span at residues Leu4 to Tyr24. A heme-binding site is contributed by Cys447.

Belongs to the cytochrome P450 family. Requires heme as cofactor.

It localises to the membrane. It carries out the reaction a flavanone + reduced [NADPH--hemoprotein reductase] + O2 = a flavone + oxidized [NADPH--hemoprotein reductase] + 2 H2O + H(+). It participates in secondary metabolite biosynthesis; flavonoid biosynthesis. Functions as a flavone synthase II (FNSII) that catalyzes the direct conversion of flavanones to flavones. In vitro, can convert liquiritigenin, naringenin and eriodictyol to 7,4'-dihydroxyflavone, apigenin and luteolin, respectively. The sequence is that of Cytochrome P450 93B2 from Gerbera hybrida (Daisy).